The primary structure comprises 553 residues: Urocanate hydratase (553 aa).

NAD(+) contacts are provided by residues 45 to 46 (GG), glutamine 123, 169 to 171 (GMG), aspartate 189, arginine 194, 235 to 236 (NA), 256 to 260 (QTSAH), 266 to 267 (YV), tyrosine 315, and glycine 485.

It belongs to the urocanase family. NAD(+) is required as a cofactor.

The protein resides in the cytoplasm. The enzyme catalyses 4-imidazolone-5-propanoate = trans-urocanate + H2O. The protein operates within amino-acid degradation; L-histidine degradation into L-glutamate; N-formimidoyl-L-glutamate from L-histidine: step 2/3. Its function is as follows. Catalyzes the conversion of urocanate to 4-imidazolone-5-propionate. This Staphylococcus saprophyticus subsp. saprophyticus (strain ATCC 15305 / DSM 20229 / NCIMB 8711 / NCTC 7292 / S-41) protein is Urocanate hydratase.